Here is a 417-residue protein sequence, read N- to C-terminus: Serine hydroxymethyltransferase (417 aa).

(6S)-5,6,7,8-tetrahydrofolate contacts are provided by residues Leu-122 and 126–128 (GHL). Lys-230 is subject to N6-(pyridoxal phosphate)lysine. Residue 355-357 (SPF) coordinates (6S)-5,6,7,8-tetrahydrofolate.

This sequence belongs to the SHMT family. As to quaternary structure, homodimer. Pyridoxal 5'-phosphate serves as cofactor.

Its subcellular location is the cytoplasm. It catalyses the reaction (6R)-5,10-methylene-5,6,7,8-tetrahydrofolate + glycine + H2O = (6S)-5,6,7,8-tetrahydrofolate + L-serine. It functions in the pathway one-carbon metabolism; tetrahydrofolate interconversion. The protein operates within amino-acid biosynthesis; glycine biosynthesis; glycine from L-serine: step 1/1. Its function is as follows. Catalyzes the reversible interconversion of serine and glycine with tetrahydrofolate (THF) serving as the one-carbon carrier. This reaction serves as the major source of one-carbon groups required for the biosynthesis of purines, thymidylate, methionine, and other important biomolecules. Also exhibits THF-independent aldolase activity toward beta-hydroxyamino acids, producing glycine and aldehydes, via a retro-aldol mechanism. In Francisella tularensis subsp. holarctica (strain LVS), this protein is Serine hydroxymethyltransferase.